We begin with the raw amino-acid sequence, 266 residues long: Cell division protein FtsQ (266 aa).

Residues 1-31 (MRQKTSSNKKKQKNTNNISLRRKLGLMYKKA) are Cytoplasmic-facing. A helical transmembrane segment spans residues 32 to 52 (ILGLKIVLMIFVCLFVFTKYF). At 53 to 266 (TSIKTYLITN…DRNKYYIQKY (214 aa)) the chain is on the periplasmic side. The region spanning 72 to 140 (FRLENVIIEG…NTVYIKLFER (69 aa)) is the POTRA domain.

This sequence belongs to the FtsQ/DivIB family. FtsQ subfamily.

It is found in the cell inner membrane. Essential cell division protein. This is Cell division protein FtsQ from Rickettsia typhi (strain ATCC VR-144 / Wilmington).